Here is a 234-residue protein sequence, read N- to C-terminus: Protein CIST1 (234 aa).

The N-terminal stretch at 1–24 is a signal peptide; that stretch reads MACPQLPPLLLLVLVVLLKAGVNY. The Extracellular portion of the chain corresponds to 25 to 180; it reads NTPFTDIVTS…GPRELHRNPS (156 aa). Positions 41 to 121 are enriched in polar residues; sequence SPVSSLISSP…THPSSGSPSA (81 aa). The tract at residues 41 to 174 is disordered; sequence SPVSSLISSP…PAPGDTGPRE (134 aa). The segment covering 122–140 has biased composition (low complexity); sequence ELTPSSHSTLPSSESLTPH. Residues 141 to 159 are compositionally biased toward polar residues; the sequence is WSPTSHSPGTEPLTSTDQT. Residues 181 to 201 form a helical membrane-spanning segment; it reads VVVVVCLLVSLLLIGSVVMAV. Residues 202–234 lie on the Cytoplasmic side of the membrane; the sequence is RFCHRNESKFENLDEVSMGSVNDRLSFAHHLQE.

The protein localises to the membrane. This is Protein CIST1 from Homo sapiens (Human).